A 326-amino-acid polypeptide reads, in one-letter code: Nucleotide sugar transporter SLC35D2 (326 aa).

Residues 1 to 15 (MEEPNAAPLPSRLAR) are Extracellular-facing. Residues 16 to 36 (LLSALFYGTCSFLIVLVNKAL) traverse the membrane as a helical segment. At 37 to 41 (LTTYG) the chain is on the cytoplasmic side. A helical membrane pass occupies residues 42-62 (FPSPIVLGIGQMATTIMILYV). The Extracellular segment spans residues 63-130 (FKLNKIIHFP…LLEAIILGTQ (68 aa)). A helical transmembrane segment spans residues 131–151 (YSLNIILSVLAIVLGAFIAAG). The Cytoplasmic portion of the chain corresponds to 152–155 (SDLT). Residues 156-176 (FNLEGYVFVFLNDIFTAANGV) form a helical membrane-spanning segment. Over 177-189 (YTKQKMDPKELGK) the chain is Extracellular. Residues 190–210 (YGVLFYNACFMLIPTVIISVS) traverse the membrane as a helical segment. At 211–225 (TGDFQQATEFRHWKN) the chain is on the cytoplasmic side. Residues 226–246 (VLFIIQFLLSCLLGFLLMYST) traverse the membrane as a helical segment. Topologically, residues 247–253 (ALCSYYN) are extracellular. Residues 254-276 (SALTTAVVGAIKNVSVAYIGMLV) traverse the membrane as a helical segment. The Cytoplasmic segment spans residues 277-280 (GGDY). A helical membrane pass occupies residues 281–303 (IFSLLNFIGLNICMAGGLRYSFL). Residues 304 to 326 (TLSSQLKPKQPVDEESIPLDLKS) are Extracellular-facing.

This sequence belongs to the TPT transporter family. SLC35D subfamily.

Its subcellular location is the golgi apparatus membrane. The catalysed reaction is UMP(out) + UDP-N-acetyl-alpha-D-glucosamine(in) = UMP(in) + UDP-N-acetyl-alpha-D-glucosamine(out). The enzyme catalyses UMP(out) + UDP-alpha-D-glucose(in) = UMP(in) + UDP-alpha-D-glucose(out). Its function is as follows. Nucleotide sugar antiporter transporting UDP-N-acetylglucosamine (UDP-GlcNAc) and UDP-glucose (UDP-Glc) from the cytosol into the lumen of the Golgi in exchange of UMP. By supplying UDP-N-acetylglucosamine, a donor substrate to heparan sulfate synthases, probably takes part in the synthesis of these glycoconjugates. This Mus musculus (Mouse) protein is Nucleotide sugar transporter SLC35D2.